The primary structure comprises 474 residues: Glycogen synthase (474 aa).

Residue Lys-15 participates in ADP-alpha-D-glucose binding.

It belongs to the glycosyltransferase 1 family. Bacterial/plant glycogen synthase subfamily.

The enzyme catalyses [(1-&gt;4)-alpha-D-glucosyl](n) + ADP-alpha-D-glucose = [(1-&gt;4)-alpha-D-glucosyl](n+1) + ADP + H(+). It participates in glycan biosynthesis; glycogen biosynthesis. Its function is as follows. Synthesizes alpha-1,4-glucan chains using ADP-glucose. In Chlamydia trachomatis serovar L2b (strain UCH-1/proctitis), this protein is Glycogen synthase.